A 303-amino-acid chain; its full sequence is Beta-lactamase L2 (303 aa).

The tat-type signal signal peptide spans 1-35; sequence MLARRRFLQFSGAAVASSLALPLLARAAGKTAASA. The active-site Acyl-ester intermediate is the Ser83. Substrate is bound at residue 247–249; it reads KTG.

The protein belongs to the class-A beta-lactamase family. In terms of processing, predicted to be exported by the Tat system. The position of the signal peptide cleavage has not been experimentally proven.

The catalysed reaction is a beta-lactam + H2O = a substituted beta-amino acid. The polypeptide is Beta-lactamase L2 (Stenotrophomonas maltophilia (Pseudomonas maltophilia)).